A 124-amino-acid chain; its full sequence is Protein TAR1 (124 aa).

The interval 80–124 (KNRTPRHTGFSPSMTSCSKEHRQGTAPKLPSPNYNSGTEGTRFQI) is disordered. The span at 111 to 124 (PNYNSGTEGTRFQI) shows a compositional bias: polar residues.

The protein resides in the mitochondrion. In terms of biological role, may be involved in mtDNA stability or mitochondrial gene expression regulation at the post-transcriptional level. This chain is Protein TAR1 (TAR1), found in Saccharomyces cerevisiae (strain ATCC 204508 / S288c) (Baker's yeast).